The primary structure comprises 456 residues: Gamma-aminobutyric acid receptor subunit alpha-1 (456 aa).

Positions 1 to 27 (MRKSPGLSDCLWAWILLLSTLTGRSYG) are cleaved as a signal peptide. The Extracellular portion of the chain corresponds to 28–253 (QPSLQDELKD…FHLKRKIGYF (226 aa)). N38 is a glycosylation site (N-linked (GlcNAc...) asparagine). R94 serves as a coordination point for 4-aminobutanoate. N-linked (GlcNAc...) asparagine glycosylation is present at N138. T157 contacts 4-aminobutanoate. A disulfide bond links C166 and C180. A helical transmembrane segment spans residues 254–274 (VIQTYLPCIMTVILSQVSFWL). W273 contacts 3alpha-hydroxy-5alpha-pregnan-11,20-dione. Residues 275–279 (NRESV) lie on the Cytoplasmic side of the membrane. Residues 280 to 301 (PARTVFGVTTVLTMTTLSISAR) form a helical membrane-spanning segment. Over 302 to 311 (NSLPKVAYAT) the chain is Extracellular. Residues 312 to 333 (AMDWFIAVCYAFVFSALIEFAT) traverse the membrane as a helical segment. At 334-421 (VNYFTKRGYA…TFNSVSKIDR (88 aa)) the chain is on the cytoplasmic side. The helical transmembrane segment at 422–441 (LSRIAFPLLFGIFNLVYWAT) threads the bilayer. The Extracellular segment spans residues 442–456 (YLNREPQLKAPTPHQ).

The protein belongs to the ligand-gated ion channel (TC 1.A.9) family. Gamma-aminobutyric acid receptor (TC 1.A.9.5) subfamily. GABRA1 sub-subfamily. As to quaternary structure, heteropentamer, formed by a combination of alpha (GABRA1-6), beta (GABRB1-3), gamma (GABRG1-3), delta (GABRD), epsilon (GABRE), rho (GABRR1-3), pi (GABRP) and theta (GABRQ) subunits, each subunit exhibiting distinct physiological and pharmacological properties. Interacts with UBQLN1. Interacts with TRAK1. Interacts with KIF21B. Identified in a complex of 720 kDa composed of LHFPL4, NLGN2, GABRA1, GABRB2, GABRG2 and GABRB3. Interacts with LHFPL4. Interacts with NLGN2. Interacts with SHISA7; interaction leads regulation of GABAAR trafficking, channel deactivation kinetics and pharmacology.

It localises to the postsynaptic cell membrane. Its subcellular location is the cell membrane. The protein resides in the cytoplasmic vesicle membrane. It catalyses the reaction chloride(in) = chloride(out). With respect to regulation, allosterically activated by benzodiazepines and the anesthetic alphaxalone. Allosterically activated by pentobarbital. Inhibited by the antagonist bicuculline. Potentiated by histamine. Functionally, alpha subunit of the heteropentameric ligand-gated chloride channel gated by Gamma-aminobutyric acid (GABA), a major inhibitory neurotransmitter in the brain. GABA-gated chloride channels, also named GABA(A) receptors (GABAAR), consist of five subunits arranged around a central pore and contain GABA active binding site(s) located at the alpha and beta subunit interface(s). When activated by GABA, GABAARs selectively allow the flow of chloride anions across the cell membrane down their electrochemical gradient. Alpha-1/GABRA1-containing GABAARs are largely synaptic. Chloride influx into the postsynaptic neuron following GABAAR opening decreases the neuron ability to generate a new action potential, thereby reducing nerve transmission. GABAARs containing alpha-1 and beta-2 or -3 subunits exhibit synaptogenic activity; the gamma-2 subunit being necessary but not sufficient to induce rapid synaptic contacts formation. GABAARs function also as histamine receptor where histamine binds at the interface of two neighboring beta subunits and potentiates GABA response. GABAARs containing alpha, beta and epsilon subunits also permit spontaneous chloride channel activity while preserving the structural information required for GABA-gated openings. Alpha-1-mediated plasticity in the orbitofrontal cortex regulates context-dependent action selection. Together with rho subunits, may also control neuronal and glial GABAergic transmission in the cerebellum. The sequence is that of Gamma-aminobutyric acid receptor subunit alpha-1 from Homo sapiens (Human).